Reading from the N-terminus, the 254-residue chain is Ribosomal RNA small subunit methyltransferase J (254 aa).

Residues arginine 107–aspartate 108, glutamate 123–arginine 124, and aspartate 174 contribute to the S-adenosyl-L-methionine site.

It belongs to the methyltransferase superfamily. RsmJ family.

The protein localises to the cytoplasm. It catalyses the reaction guanosine(1516) in 16S rRNA + S-adenosyl-L-methionine = N(2)-methylguanosine(1516) in 16S rRNA + S-adenosyl-L-homocysteine + H(+). Functionally, specifically methylates the guanosine in position 1516 of 16S rRNA. The polypeptide is Ribosomal RNA small subunit methyltransferase J (Coxiella burnetii (strain CbuK_Q154) (Coxiella burnetii (strain Q154))).